The sequence spans 294 residues: 4-hydroxy-tetrahydrodipicolinate synthase (294 aa).

A pyruvate-binding site is contributed by Thr47. The Proton donor/acceptor role is filled by Tyr135. The active-site Schiff-base intermediate with substrate is the Lys164. Val206 is a binding site for pyruvate.

It belongs to the DapA family. As to quaternary structure, homotetramer; dimer of dimers.

The protein localises to the cytoplasm. It carries out the reaction L-aspartate 4-semialdehyde + pyruvate = (2S,4S)-4-hydroxy-2,3,4,5-tetrahydrodipicolinate + H2O + H(+). It functions in the pathway amino-acid biosynthesis; L-lysine biosynthesis via DAP pathway; (S)-tetrahydrodipicolinate from L-aspartate: step 3/4. Functionally, catalyzes the condensation of (S)-aspartate-beta-semialdehyde [(S)-ASA] and pyruvate to 4-hydroxy-tetrahydrodipicolinate (HTPA). This Lachnoclostridium phytofermentans (strain ATCC 700394 / DSM 18823 / ISDg) (Clostridium phytofermentans) protein is 4-hydroxy-tetrahydrodipicolinate synthase.